Here is a 188-residue protein sequence, read N- to C-terminus: Heterodisulfide reductase subunit C-like protein (188 aa).

4Fe-4S ferredoxin-type domains are found at residues 34 to 64 (KELG…FEWY) and 78 to 109 (DELL…FEVM). [4Fe-4S] cluster contacts are provided by C44, C47, C50, C54, C89, C92, C95, and C99.

Belongs to the HdrC family. The heterodisulfide reductase is composed of three subunits; HdlA, HdlB and HdlC. It forms a complex with the F420-non-reducing hydrogenase (Mvh), which provides the reducing equivalents to the heterodisulfide reductase.

The protein localises to the cytoplasm. Its function is as follows. Has oxidoreductase activity. The Hdl and Mvh subunits may together mediate electron transfer from hydrogen to an unidentified electron acceptor on the cytoplasmic side of the membrane. The protein is Heterodisulfide reductase subunit C-like protein (hdlC) of Archaeoglobus profundus (strain DSM 5631 / JCM 9629 / NBRC 100127 / Av18).